The following is a 393-amino-acid chain: Acetyl-CoA acetyltransferase (393 aa).

Cysteine 90 functions as the Acyl-thioester intermediate in the catalytic mechanism. Residues histidine 349 and cysteine 379 each act as proton acceptor in the active site.

This sequence belongs to the thiolase-like superfamily. Thiolase family. Homotetramer.

It localises to the cytoplasm. It carries out the reaction 2 acetyl-CoA = acetoacetyl-CoA + CoA. The protein operates within biopolymer metabolism; poly-(R)-3-hydroxybutanoate biosynthesis. It participates in metabolic intermediate biosynthesis; (R)-mevalonate biosynthesis; (R)-mevalonate from acetyl-CoA: step 1/3. The protein is Acetyl-CoA acetyltransferase of Rhizobium meliloti (strain 1021) (Ensifer meliloti).